Here is a 166-residue protein sequence, read N- to C-terminus: Putative 4-hydroxy-4-methyl-2-oxoglutarate aldolase (166 aa).

Substrate-binding positions include 74–77 (GDQI) and Arg96. Position 97 (Asp97) interacts with a divalent metal cation.

The protein belongs to the class II aldolase/RraA-like family. As to quaternary structure, homotrimer. Requires a divalent metal cation as cofactor.

The enzyme catalyses 4-hydroxy-4-methyl-2-oxoglutarate = 2 pyruvate. The catalysed reaction is oxaloacetate + H(+) = pyruvate + CO2. In terms of biological role, catalyzes the aldol cleavage of 4-hydroxy-4-methyl-2-oxoglutarate (HMG) into 2 molecules of pyruvate. Also contains a secondary oxaloacetate (OAA) decarboxylase activity due to the common pyruvate enolate transition state formed following C-C bond cleavage in the retro-aldol and decarboxylation reactions. The protein is Putative 4-hydroxy-4-methyl-2-oxoglutarate aldolase of Xanthomonas campestris pv. campestris (strain 8004).